The sequence spans 127 residues: Large ribosomal subunit protein bL12 (127 aa).

The protein belongs to the bacterial ribosomal protein bL12 family. In terms of assembly, homodimer. Part of the ribosomal stalk of the 50S ribosomal subunit. Forms a multimeric L10(L12)X complex, where L10 forms an elongated spine to which 2 to 4 L12 dimers bind in a sequential fashion. Binds GTP-bound translation factors.

Its function is as follows. Forms part of the ribosomal stalk which helps the ribosome interact with GTP-bound translation factors. Is thus essential for accurate translation. This chain is Large ribosomal subunit protein bL12, found in Streptomyces virginiae (Streptomyces cinnamonensis).